A 254-amino-acid chain; its full sequence is Type III pantothenate kinase (254 aa).

13–20 lines the ATP pocket; it reads MIGNTRQH. Substrate is bound by residues Y84 and 88–91; that span reads GLDR. The active-site Proton acceptor is D90. D110 serves as a coordination point for K(+). ATP is bound at residue T113. Substrate is bound at residue T166.

It belongs to the type III pantothenate kinase family. In terms of assembly, homodimer. Requires NH4(+) as cofactor. K(+) is required as a cofactor.

It localises to the cytoplasm. The enzyme catalyses (R)-pantothenate + ATP = (R)-4'-phosphopantothenate + ADP + H(+). It participates in cofactor biosynthesis; coenzyme A biosynthesis; CoA from (R)-pantothenate: step 1/5. Catalyzes the phosphorylation of pantothenate (Pan), the first step in CoA biosynthesis. The sequence is that of Type III pantothenate kinase from Thermosynechococcus vestitus (strain NIES-2133 / IAM M-273 / BP-1).